The primary structure comprises 1363 residues: DNA-directed RNA polymerase subunit beta' (1363 aa).

Residues 1–39 form a disordered region; sequence MTSTPSKSRKSSKGSKAAKAAASAPETRPLAKTPPPFRN. Positions 14 to 24 are enriched in low complexity; the sequence is GSKAAKAAASA. Zn(2+) is bound by residues C248, C315, C322, and C325.

It belongs to the RNA polymerase beta' chain family. RpoC2 subfamily. As to quaternary structure, in cyanobacteria the RNAP catalytic core is composed of 2 alpha, 1 beta, 1 beta', 1 gamma and 1 omega subunit. When a sigma factor is associated with the core the holoenzyme is formed, which can initiate transcription. It depends on Zn(2+) as a cofactor.

It catalyses the reaction RNA(n) + a ribonucleoside 5'-triphosphate = RNA(n+1) + diphosphate. DNA-dependent RNA polymerase catalyzes the transcription of DNA into RNA using the four ribonucleoside triphosphates as substrates. This is DNA-directed RNA polymerase subunit beta' from Synechococcus sp. (strain WH7803).